The following is a 530-amino-acid chain: PC4 and SFRS1-interacting protein (530 aa).

The PWWP domain maps to 1 to 64 (MTRDFKPGDL…PKDIFPYSEN (64 aa)). Lysine 75 participates in a covalent cross-link: Glycyl lysine isopeptide (Lys-Gly) (interchain with G-Cter in SUMO2). A disordered region spans residues 88 to 349 (PKVKFSSQQA…VEKKRETSMD (262 aa)). The segment covering 93-107 (SSQQASAKQSNASSD) has biased composition (low complexity). Serine 102, serine 105, and serine 106 each carry phosphoserine. The segment covering 113 to 135 (KETSVSKEDTDPEEKASNEDVTK) has biased composition (basic and acidic residues). Threonine 115 and threonine 122 each carry phosphothreonine. Serine 129 is modified (phosphoserine). At threonine 141 the chain carries Phosphothreonine. Positions 144–153 (AARRGRKRKA) are enriched in basic residues. A Nuclear localization signal motif is present at residues 146–156 (RRGRKRKAEKQ). Threonine 167 carries the post-translational modification Phosphothreonine. Residues serine 177 and serine 206 each carry the phosphoserine modification. Basic and acidic residues predominate over residues 213–261 (EEDKSKKKGQEEKQPKKQLKKDEEGQKEEEKPRKEPDKKEGKKEVESKR). Residue serine 271 is modified to Phosphoserine. Threonine 272 bears the Phosphothreonine mark. 2 positions are modified to phosphoserine: serine 273 and serine 275. A compositionally biased stretch (acidic residues) spans 274–283 (DSEEEGDDQE). Basic residues predominate over residues 287-302 (KRKGGRNFQTAHRRNM). Positions 305–349 (GQHEKEAADRKRKQEEQMETEQQNKDEGKKPEVKKVEKKRETSMD) are enriched in basic and acidic residues. Coiled-coil stretches lie at residues 306-334 (QHEK…EGKK) and 371-395 (NRCI…KHTE). An integrase-binding domain (IBD) region spans residues 340-417 (VEKKRETSMD…VSQVIMEKST (78 aa)). Phosphoserine is present on serine 434. Threonine 437 is modified (phosphothreonine). Serine 443 carries the post-translational modification Phosphoserine. Basic and acidic residues predominate over residues 446-473 (EQRQHEEANKTKDQGKKGPNKKLEKEQT). The segment at 446–530 (EQRQHEEANK…ISLKDSTLDN (85 aa)) is disordered. Residues 474–494 (GSKTLNGGSDAQDSNQPQHNG) are compositionally biased toward polar residues. A compositionally biased stretch (basic and acidic residues) spans 498–530 (EESKDNHEASSKKKPSSEERETEISLKDSTLDN). The residue at position 514 (serine 514) is a Phosphoserine. Arginine 517 carries the citrulline modification. A Phosphoserine modification is found at serine 522. Residue threonine 527 is modified to Phosphothreonine.

It belongs to the HDGF family. As to quaternary structure, monomer. Interacts with IFRD1/PC4. Interacts (via IBD domain) with POGZ (via IBM motif) and CDCA7L (via IBM motifs). Interacts (via IBD domain) with KMT2A (via IBM motifs) with a moderate affinity whereas interacts with the KMT2A-MEN1 complex with a greater affinity; MEN1 enhances interaction of KMT2A with PSIP1. Interacts (via IBD domain) with IWS1 (via IBM motif), MED1 (via IBM motif) and DBF4 (via IBM motifs). In terms of processing, citrullinated by PADI4.

It localises to the nucleus. Its function is as follows. Transcriptional coactivator involved in neuroepithelial stem cell differentiation and neurogenesis. Involved in particular in lens epithelial cell gene regulation and stress responses. May play an important role in lens epithelial to fiber cell terminal differentiation. May play a protective role during stress-induced apoptosis. This is PC4 and SFRS1-interacting protein (PSIP1) from Bos taurus (Bovine).